The primary structure comprises 312 residues: Putative 1-aminocyclopropane-1-carboxylate deaminase (312 aa).

N6-(pyridoxal phosphate)lysine is present on K42.

It belongs to the ACC deaminase/D-cysteine desulfhydrase family. Requires pyridoxal 5'-phosphate as cofactor.

The enzyme catalyses 1-aminocyclopropane-1-carboxylate + H2O = 2-oxobutanoate + NH4(+). This chain is Putative 1-aminocyclopropane-1-carboxylate deaminase, found in Thermotoga maritima (strain ATCC 43589 / DSM 3109 / JCM 10099 / NBRC 100826 / MSB8).